The sequence spans 81 residues: Conotoxin ArMKLT2-01 (81 aa).

Positions 1-19 are cleaved as a signal peptide; sequence MKLTCVIIVVALFLTACHA. The propeptide occupies 20–43; the sequence is KDKQEHPAVRGSDDMQDSEDLKLA. 3 disulfide bridges follow: Cys-46-Cys-61, Cys-53-Cys-65, and Cys-60-Cys-74.

The protein belongs to the conotoxin O1 superfamily. As to expression, expressed by the venom duct.

Its subcellular location is the secreted. The chain is Conotoxin ArMKLT2-01 from Conus arenatus (Sand-dusted cone).